Reading from the N-terminus, the 23-residue chain is Augerpeptide hhe7a (23 aa).

3 cysteine pairs are disulfide-bonded: Cys3–Cys11, Cys6–Cys19, and Cys10–Cys22.

In terms of tissue distribution, expressed by the venom duct.

The protein resides in the secreted. Functionally, causes abnormal twist followed by immobility when injected into C.elegans. This chain is Augerpeptide hhe7a, found in Hastula hectica (Sea snail).